A 466-amino-acid chain; its full sequence is Flagellum-specific ATP synthase (466 aa).

An ATP-binding site is contributed by 194 to 201; sequence SSSGLGKS.

Belongs to the ATPase alpha/beta chains family.

It localises to the cytoplasm. The enzyme catalyses ATP + H2O + 4 H(+)(in) = ADP + phosphate + 5 H(+)(out). Functionally, probable catalytic subunit of a protein translocase for flagellum-specific export, or a proton translocase involved in local circuits at the flagellum. May be involved in a specialized protein export pathway that proceeds without signal peptide cleavage. The protein is Flagellum-specific ATP synthase (fliI) of Buchnera aphidicola subsp. Schizaphis graminum (strain Sg).